Here is a 204-residue protein sequence, read N- to C-terminus: FMN-dependent NADH:quinone oxidoreductase (204 aa).

FMN-binding positions include Ser9, 15 to 17 (SVS), and 97 to 100 (MYNF).

It belongs to the azoreductase type 1 family. As to quaternary structure, homodimer. FMN serves as cofactor.

It catalyses the reaction 2 a quinone + NADH + H(+) = 2 a 1,4-benzosemiquinone + NAD(+). The enzyme catalyses N,N-dimethyl-1,4-phenylenediamine + anthranilate + 2 NAD(+) = 2-(4-dimethylaminophenyl)diazenylbenzoate + 2 NADH + 2 H(+). In terms of biological role, quinone reductase that provides resistance to thiol-specific stress caused by electrophilic quinones. Also exhibits azoreductase activity. Catalyzes the reductive cleavage of the azo bond in aromatic azo compounds to the corresponding amines. The protein is FMN-dependent NADH:quinone oxidoreductase of Methylobacterium radiotolerans (strain ATCC 27329 / DSM 1819 / JCM 2831 / NBRC 15690 / NCIMB 10815 / 0-1).